Here is a 92-residue protein sequence, read N- to C-terminus: Small ribosomal subunit protein uS19 (92 aa).

The protein belongs to the universal ribosomal protein uS19 family.

Its function is as follows. Protein S19 forms a complex with S13 that binds strongly to the 16S ribosomal RNA. The polypeptide is Small ribosomal subunit protein uS19 (Paracidovorax citrulli (strain AAC00-1) (Acidovorax citrulli)).